A 56-amino-acid polypeptide reads, in one-letter code: Large ribosomal subunit protein bL32 (56 aa).

Residues 1-20 are compositionally biased toward basic residues; that stretch reads MAVPKRRTSRSNTRSRRAQW. Positions 1 to 26 are disordered; sequence MAVPKRRTSRSNTRSRRAQWKAKAPA.

This sequence belongs to the bacterial ribosomal protein bL32 family.

In Parafrankia sp. (strain EAN1pec), this protein is Large ribosomal subunit protein bL32.